We begin with the raw amino-acid sequence, 819 residues long: USP6 N-terminal-like protein (819 aa).

Position 1 is an N-acetylmethionine (Met-1). A Rab-GAP TBC domain is found at 100–292 (GIPLQLRGEV…RIWDIYIFEG (193 aa)). Basic and acidic residues predominate over residues 355–367 (DLPEPGKEDEYPK). 2 disordered regions span residues 355-498 (DLPE…ERTT) and 513-678 (LPVA…SRPT). 3 positions are modified to phosphoserine: Ser-389, Ser-394, and Ser-398. 2 stretches are compositionally biased toward basic and acidic residues: residues 399–414 (SRRE…EHSP) and 432–449 (KSVD…ESQR). Residues 464–476 (HAAANQNSNAISN) show a composition bias toward low complexity. Basic and acidic residues-rich tracts occupy residues 477–489 (VRKE…RKPS) and 533–542 (KALDGGEGKR). 2 positions are modified to phosphoserine: Ser-544 and Ser-547. Residues 556-571 (ESEHGASAEEGPERTH) show a composition bias toward basic and acidic residues. Phosphoserine is present on residues Ser-574, Ser-631, Ser-644, Ser-648, Ser-665, Ser-669, and Ser-704. The span at 642 to 655 (FVSTQISPRPQINP) shows a compositional bias: polar residues. Tyr-717 bears the Phosphotyrosine mark. The segment covering 788–802 (ASPPGYPYAGPSPSA) has biased composition (low complexity). Positions 788–807 (ASPPGYPYAGPSPSAHHYRN) are disordered.

Interacts with EPS8.

It is found in the golgi apparatus. Its subcellular location is the cytoplasmic vesicle. Functionally, acts as a GTPase-activating protein for RAB5A and RAB43. Involved in receptor trafficking. In complex with EPS8 inhibits internalization of EGFR. Involved in retrograde transport from the endocytic pathway to the Golgi apparatus. Involved in the transport of Shiga toxin from early and recycling endosomes to the trans-Golgi network. Required for structural integrity of the Golgi complex. The chain is USP6 N-terminal-like protein (Usp6nl) from Mus musculus (Mouse).